The chain runs to 759 residues: Phosphoribosylformylglycinamidine synthase subunit PurL (759 aa).

Residue histidine 61 is part of the active site. Positions 64 and 105 each coordinate ATP. Glutamate 107 lines the Mg(2+) pocket. Substrate contacts are provided by residues serine 108–histidine 111 and arginine 130. Histidine 109 functions as the Proton acceptor in the catalytic mechanism. Residue aspartate 131 coordinates Mg(2+). Residue glutamine 260 participates in substrate binding. Mg(2+) is bound at residue aspartate 288. Glutamate 332–glutamine 334 contributes to the substrate binding site. ATP is bound by residues aspartate 520 and glycine 557. A Mg(2+)-binding site is contributed by asparagine 558. Serine 560 contacts substrate.

This sequence belongs to the FGAMS family. As to quaternary structure, monomer. Part of the FGAM synthase complex composed of 1 PurL, 1 PurQ and 2 PurS subunits.

The protein resides in the cytoplasm. It catalyses the reaction N(2)-formyl-N(1)-(5-phospho-beta-D-ribosyl)glycinamide + L-glutamine + ATP + H2O = 2-formamido-N(1)-(5-O-phospho-beta-D-ribosyl)acetamidine + L-glutamate + ADP + phosphate + H(+). Its pathway is purine metabolism; IMP biosynthesis via de novo pathway; 5-amino-1-(5-phospho-D-ribosyl)imidazole from N(2)-formyl-N(1)-(5-phospho-D-ribosyl)glycinamide: step 1/2. Part of the phosphoribosylformylglycinamidine synthase complex involved in the purines biosynthetic pathway. Catalyzes the ATP-dependent conversion of formylglycinamide ribonucleotide (FGAR) and glutamine to yield formylglycinamidine ribonucleotide (FGAM) and glutamate. The FGAM synthase complex is composed of three subunits. PurQ produces an ammonia molecule by converting glutamine to glutamate. PurL transfers the ammonia molecule to FGAR to form FGAM in an ATP-dependent manner. PurS interacts with PurQ and PurL and is thought to assist in the transfer of the ammonia molecule from PurQ to PurL. The polypeptide is Phosphoribosylformylglycinamidine synthase subunit PurL (Thermoplasma acidophilum (strain ATCC 25905 / DSM 1728 / JCM 9062 / NBRC 15155 / AMRC-C165)).